A 393-amino-acid chain; its full sequence is Protein TsgA (393 aa).

A run of 12 helical transmembrane segments spans residues 11 to 31, 51 to 71, 78 to 98, 101 to 121, 134 to 154, 162 to 182, 206 to 226, 245 to 265, 273 to 293, 298 to 318, 332 to 352, and 361 to 381; these read WISF…GMVM, FLNA…EIIP, FGFI…SLAL, AAMF…TFLI, LLFT…VAAF, WYWV…LTFG, IGVL…LGFI, ALVS…SFIL, ILTV…TGTQ, WFIL…ITLG, FILT…GPIV, and LLTA…LGFV.

Belongs to the major facilitator superfamily. TsgA family.

The protein localises to the cell inner membrane. This Salmonella paratyphi B (strain ATCC BAA-1250 / SPB7) protein is Protein TsgA.